Here is a 192-residue protein sequence, read N- to C-terminus: Transmembrane protein 11, mitochondrial (192 aa).

The segment at 1-20 (MAAWGRRRLGPGSSGGSARE) is disordered. 2 helical membrane passes run 84-100 (TAVL…LALP) and 107-124 (ISLP…LYGI).

This sequence belongs to the TMEM11 family. Associates with the mitochondrial contact site and cristae organizing system (MICOS) complex, composed of at least MICOS10/MIC10, CHCHD3/MIC19, CHCHD6/MIC25, APOOL/MIC27, IMMT/MIC60, APOO/MIC23/MIC26 and QIL1/MIC13. This complex was also known under the names MINOS or MitOS complex. The MICOS complex associates with mitochondrial outer membrane proteins SAMM50, MTX1, MTX2 and DNAJC11, mitochondrial inner membrane protein TMEM11 and with HSPA9. Interacts with IMMT/MIC60.

Its subcellular location is the mitochondrion inner membrane. Functionally, plays a role in mitochondrial morphogenesis. The sequence is that of Transmembrane protein 11, mitochondrial (TMEM11) from Homo sapiens (Human).